The chain runs to 124 residues: Small ribosomal subunit protein uS12 (124 aa).

Residues 1–23 (MATINQLVRKPRVRQKQKSNVPA) form a disordered region. Asp-89 bears the 3-methylthioaspartic acid mark. The tract at residues 103-124 (DTAGVGDRRQGRSKYGAKRPKG) is disordered. The span at 113-124 (GRSKYGAKRPKG) shows a compositional bias: basic residues.

It belongs to the universal ribosomal protein uS12 family. As to quaternary structure, part of the 30S ribosomal subunit. Contacts proteins S8 and S17. May interact with IF1 in the 30S initiation complex.

With S4 and S5 plays an important role in translational accuracy. In terms of biological role, interacts with and stabilizes bases of the 16S rRNA that are involved in tRNA selection in the A site and with the mRNA backbone. Located at the interface of the 30S and 50S subunits, it traverses the body of the 30S subunit contacting proteins on the other side and probably holding the rRNA structure together. The combined cluster of proteins S8, S12 and S17 appears to hold together the shoulder and platform of the 30S subunit. The chain is Small ribosomal subunit protein uS12 from Nitrosococcus oceani (strain ATCC 19707 / BCRC 17464 / JCM 30415 / NCIMB 11848 / C-107).